The chain runs to 262 residues: Acyl-[acyl-carrier-protein]--UDP-N-acetylglucosamine O-acyltransferase (262 aa).

The protein belongs to the transferase hexapeptide repeat family. LpxA subfamily. In terms of assembly, homotrimer.

Its subcellular location is the cytoplasm. The catalysed reaction is a (3R)-hydroxyacyl-[ACP] + UDP-N-acetyl-alpha-D-glucosamine = a UDP-3-O-[(3R)-3-hydroxyacyl]-N-acetyl-alpha-D-glucosamine + holo-[ACP]. It participates in glycolipid biosynthesis; lipid IV(A) biosynthesis; lipid IV(A) from (3R)-3-hydroxytetradecanoyl-[acyl-carrier-protein] and UDP-N-acetyl-alpha-D-glucosamine: step 1/6. Its function is as follows. Involved in the biosynthesis of lipid A, a phosphorylated glycolipid that anchors the lipopolysaccharide to the outer membrane of the cell. The chain is Acyl-[acyl-carrier-protein]--UDP-N-acetylglucosamine O-acyltransferase from Salmonella arizonae (strain ATCC BAA-731 / CDC346-86 / RSK2980).